The chain runs to 49 residues: Large ribosomal subunit protein bL33 (49 aa).

The protein belongs to the bacterial ribosomal protein bL33 family.

The protein is Large ribosomal subunit protein bL33 of Nitratidesulfovibrio vulgaris (strain ATCC 29579 / DSM 644 / CCUG 34227 / NCIMB 8303 / VKM B-1760 / Hildenborough) (Desulfovibrio vulgaris).